We begin with the raw amino-acid sequence, 199 residues long: Recombination protein RecR (199 aa).

The C4-type zinc-finger motif lies at 56–71; sequence CATCGNVAQEEQCNIC. In terms of domain architecture, Toprim spans 79 to 174; sequence SVICVVEEPK…KVTRLASGLP (96 aa).

This sequence belongs to the RecR family.

Its function is as follows. May play a role in DNA repair. It seems to be involved in an RecBC-independent recombinational process of DNA repair. It may act with RecF and RecO. The protein is Recombination protein RecR of Streptomyces coelicolor (strain ATCC BAA-471 / A3(2) / M145).